Here is an 86-residue protein sequence, read N- to C-terminus: Defensin-like SRCA-homolog protein (86 aa).

Positions Met-1–Ala-26 are cleaved as a signal peptide. Cystine bridges form between Cys-32/Cys-84, Cys-42/Cys-70, Cys-52/Cys-79, and Cys-68/Cys-81.

The protein belongs to the DEFL family.

It localises to the secreted. Involved in male-mediated self-incompatibility. The protein is Defensin-like SRCA-homolog protein (SCR37) of Arabidopsis lyrata (Lyre-leaved rock-cress).